Reading from the N-terminus, the 718-residue chain is Exostosin-2 (718 aa).

Topologically, residues 1–25 are cytoplasmic; the sequence is MCASVKYNIRGPALIPRMKTKHRIY. Residues 26-46 form a helical; Signal-anchor for type II membrane protein membrane-spanning segment; the sequence is YITLFSIVLLGLIATGMFQFW. The Lumenal portion of the chain corresponds to 47 to 718; it reads PHSIESSNDW…LKSFPNIGSL (672 aa). 4 disulfides stabilise this stretch: cysteine 85–cysteine 90, cysteine 96–cysteine 151, cysteine 286–cysteine 300, and cysteine 318–cysteine 339. Residue asparagine 288 is glycosylated (N-linked (GlcNAc...) asparagine). UDP contacts are provided by leucine 461, arginine 465, asparagine 490, and asparagine 517. UDP-N-acetyl-alpha-D-glucosamine contacts are provided by arginine 465, asparagine 490, asparagine 517, arginine 522, aspartate 538, aspartate 539, and aspartate 540. Residues aspartate 538 and aspartate 539 each contribute to the UDP site. Aspartate 540 provides a ligand contact to Mn(2+). Residues tyrosine 582 and serine 584 each contribute to the a protein site. The cysteines at positions 626 and 676 are disulfide-linked. 2 residues coordinate UDP-N-acetyl-alpha-D-glucosamine: glutamate 627 and aspartate 628. N-linked (GlcNAc...) asparagine glycosylation is present at asparagine 637. The a protein site is built by lysine 651 and lysine 653. Arginine 673 contacts UDP-N-acetyl-alpha-D-glucosamine.

It belongs to the glycosyltransferase 47 family. As to quaternary structure, part of the heparan sulfate polymerase, a dimeric complex composed of EXT1 and EXT2. Could also form homooligomeric complexes. Interacts with NDST1. Interacts with GALNT5. It depends on Mn(2+) as a cofactor. In terms of processing, N-glycosylated at Asn-637. Post-translationally, a soluble form is generated by proteolytic processing. Widely expressed.

It is found in the golgi apparatus membrane. The protein localises to the golgi apparatus. It localises to the cis-Golgi network membrane. The protein resides in the endoplasmic reticulum membrane. Its subcellular location is the secreted. The catalysed reaction is 3-O-{[(1-&gt;4)-beta-D-GlcA-(1-&gt;4)-alpha-D-GlcNAc](n)-(1-&gt;4)-beta-D-GlcA-(1-&gt;3)-beta-D-Gal-(1-&gt;3)-beta-D-Gal-(1-&gt;4)-beta-D-Xyl}-L-seryl-[protein] + UDP-N-acetyl-alpha-D-glucosamine = 3-O-{alpha-D-GlcNAc-[(1-&gt;4)-beta-D-GlcA-(1-&gt;4)-alpha-D-GlcNAc](n)-(1-&gt;4)-beta-D-GlcA-(1-&gt;3)-beta-D-Gal-(1-&gt;3)-beta-D-Gal-(1-&gt;4)-beta-D-Xyl}-L-seryl-[protein] + UDP + H(+). Its pathway is protein modification; protein glycosylation. Glycosyltransferase forming with EXT1 the heterodimeric heparan sulfate polymerase which catalyzes the elongation of the heparan sulfate glycan backbone. Glycan backbone extension consists in the alternating transfer of (1-&gt;4)-beta-D-GlcA and (1-&gt;4)-alpha-D-GlcNAc residues from their respective UDP-sugar donors. Both EXT1 and EXT2 are required for the full activity of the polymerase since EXT1 bears the N-acetylglucosaminyl-proteoglycan 4-beta-glucuronosyltransferase activity within the complex while EXT2 carries the glucuronosyl-N-acetylglucosaminyl-proteoglycan 4-alpha-N-acetylglucosaminyltransferase activity. Heparan sulfate proteoglycans are ubiquitous components of the extracellular matrix and play an important role in tissue homeostasis and signaling. The sequence is that of Exostosin-2 from Homo sapiens (Human).